A 174-amino-acid polypeptide reads, in one-letter code: Ribosome maturation factor RimM (174 aa).

One can recognise a PRC barrel domain in the interval 99–172; sequence ADEFFYHDVI…RLVIRPIAGL (74 aa).

The protein belongs to the RimM family. Binds ribosomal protein uS19.

It is found in the cytoplasm. Functionally, an accessory protein needed during the final step in the assembly of 30S ribosomal subunit, possibly for assembly of the head region. Essential for efficient processing of 16S rRNA. May be needed both before and after RbfA during the maturation of 16S rRNA. It has affinity for free ribosomal 30S subunits but not for 70S ribosomes. The chain is Ribosome maturation factor RimM from Chloroflexus aurantiacus (strain ATCC 29366 / DSM 635 / J-10-fl).